The chain runs to 126 residues: Holo-[acyl-carrier-protein] synthase (126 aa).

Asp9 and Glu58 together coordinate Mg(2+).

It belongs to the P-Pant transferase superfamily. AcpS family. It depends on Mg(2+) as a cofactor.

The protein resides in the cytoplasm. It carries out the reaction apo-[ACP] + CoA = holo-[ACP] + adenosine 3',5'-bisphosphate + H(+). Functionally, transfers the 4'-phosphopantetheine moiety from coenzyme A to a Ser of acyl-carrier-protein. The polypeptide is Holo-[acyl-carrier-protein] synthase (Shewanella denitrificans (strain OS217 / ATCC BAA-1090 / DSM 15013)).